Reading from the N-terminus, the 435-residue chain is AP-2 complex subunit mu (435 aa).

Positions 170–434 constitute an MHD domain; the sequence is RNELFLDVLE…IGRSGIYETR (265 aa). The a 1,2-diacyl-sn-glycero-3-phospho-(1D-myo-inositol-3,4,5-trisphosphate) site is built by lysine 341, lysine 345, and lysine 354.

The protein belongs to the adaptor complexes medium subunit family. Adaptor protein complex 2 (AP-2) is a heterotetramer composed of two large adaptins (alpha-type subunit and beta-type subunit), a medium adaptin (mu-type subunit) and a small adaptin (sigma-type subunit).

The protein resides in the cell membrane. Its subcellular location is the membrane. It is found in the coated pit. In terms of biological role, component of the adaptor complexes which link clathrin to receptors in coated vesicles. Clathrin-associated protein complexes are believed to interact with the cytoplasmic tails of membrane proteins, leading to their selection and concentration. AP50 is a subunit of the plasma membrane adaptor. The complex binds polyphosphoinositide-containing lipids. The protein is AP-2 complex subunit mu (ap2m1) of Xenopus tropicalis (Western clawed frog).